The sequence spans 398 residues: Calcium-binding and coiled-coil domain-containing protein 2 (398 aa).

Positions Ile-133–Val-136 match the CLIR motif. Positions Thr-137 to Met-301 form a coiled coil. The short motif at Asp-203 to Glu-206 is the LIR-like element. Residues Thr-314 to Pro-341 form a disordered region. Positions Asn-323–Ser-333 are interaction with LGALS8. Residues Lys-347 to Leu-398 form an interaction with MYO6 region. A UBZ1-type zinc finger spans residues Cys-371 to His-396. Zn(2+)-binding residues include Cys-374, Cys-377, His-392, and His-396. A Phosphoserine modification is found at Ser-397.

This sequence belongs to the CALCOCO family. Dimer. Part of a complex consisting of CALCOCO2, TAX1BP1 and MYO6. Interacts with MYO6. Interacts with GEMIN4. Interacts with ATG8 family members MAP1LC3A, MAP1LC3B, GABARAP, GABARAPL1 and GABARAPL2. Interacts with ATG8 family member MAP1LC3C. Interacts with LGALS8. Interacts with TOM1; the interaction is indirect and is mediated by MYO6, which acts as a bridge between TOM1 and CALCOCO2. Interacts with AZI2.

It localises to the cytoplasm. The protein resides in the perinuclear region. It is found in the cytoskeleton. The protein localises to the cytoplasmic vesicle. Its subcellular location is the autophagosome membrane. Xenophagy-specific receptor required for autophagy-mediated intracellular bacteria degradation. Acts as an effector protein of galectin-sensed membrane damage that restricts the proliferation of infecting pathogens upon entry into the cytosol by targeting LGALS8-associated bacteria for autophagy. Initially orchestrates bacteria targeting to autophagosomes and subsequently ensures pathogen degradation by regulating pathogen-containing autophagosome maturation. Bacteria targeting to autophagosomes relies on its interaction with MAP1LC3A, MAP1LC3B and/or GABARAPL2, whereas regulation of pathogen-containing autophagosome maturation requires the interaction with MAP3LC3C. May play a role in ruffle formation and actin cytoskeleton organization and seems to negatively regulate constitutive secretion. The chain is Calcium-binding and coiled-coil domain-containing protein 2 from Macaca fascicularis (Crab-eating macaque).